A 122-amino-acid chain; its full sequence is Large ribosomal subunit protein uL14c (122 aa).

Belongs to the universal ribosomal protein uL14 family. Part of the 50S ribosomal subunit.

Its subcellular location is the plastid. The protein localises to the chloroplast. Functionally, binds to 23S rRNA. The chain is Large ribosomal subunit protein uL14c from Chlamydomonas reinhardtii (Chlamydomonas smithii).